The chain runs to 2270 residues: Protein DOP1B (2270 aa).

Disordered stretches follow at residues 548-572 (METP…VEGE), 697-716 (LKQR…TEEE), and 1084-1145 (QEQD…DMPR). The span at 1095 to 1145 (ADTSTGHNDSDNTSSFTPSSVDLSSDQNYRDNTAGQVTHKNTGQQNMDMPR) shows a compositional bias: polar residues.

Belongs to the DOP1 family.

Its subcellular location is the golgi apparatus membrane. May be involved in protein traffic between late Golgi and early endosomes. In Xenopus laevis (African clawed frog), this protein is Protein DOP1B (dop1b).